Consider the following 101-residue polypeptide: MGAMAKPDCIITCDSKNLTIKTESTLKTTQFSGTLGEKFEENTADGRRTQTVCNFTDGALVQHQEWDGKESTITRKLKDGKLVVERVMNHVACTRIYEKAQ.

Belongs to the calycin superfamily. Fatty-acid binding protein (FABP) family.

High specificity for fatty acids. This Homo sapiens (Human) protein is Putative fatty acid-binding protein 5-like protein 3 (FABP5P3).